A 25-amino-acid polypeptide reads, in one-letter code: Toxin Tpa3 (25 aa).

It belongs to the non-disulfide-bridged peptide (NDBP) superfamily. In terms of tissue distribution, expressed by the venom gland.

It localises to the secreted. Unknown. Is not toxic to mammals. The chain is Toxin Tpa3 from Tityus pachyurus (Colombian scorpion).